We begin with the raw amino-acid sequence, 284 residues long: Tropomyosin (284 aa).

Positions 1 to 284 (MDAIKKKMQA…DMTFTELIGN (284 aa)) form a coiled coil.

The protein belongs to the tropomyosin family. Homodimer.

Functionally, tropomyosin, in association with the troponin complex, plays a central role in the calcium dependent regulation of muscle contraction. The polypeptide is Tropomyosin (Blattella germanica (German cockroach)).